The sequence spans 1069 residues: MDDKASVGKISVSSDSVSTLNSEDFVLVSRQGDETPSTNNGSDDEKTGLKIVGNGSEQQLQKELADVLMDPPMDDQPGEKELVKRSQLDGEGDGPLSNQLSASSTINPVPLVGLQKPEMSLPVKPGQGDSEASSPFTPVADEDSVVFSKLTYLGCASVNAPRSEVEALRMMSILRSQCQISLDVTLSVPNVSEGIVRLLDPQTNTEIANYPIYKILFCVRGHDGTPESDCFAFTESHYNAELFRIHVFRCEIQEAVSRILYSFATAFRRSAKQTPLSATAAPQTPDSDIFTFSVSLEIKEDDGKGYFSAVPKDKDRQCFKLRQGIDKKIVIYVQQTTNKELAIERCFGLLLSPGKDVRNSDMHLLDLESMGKSSDGKSYVITGSWNPKSPHFQVVNEETPKDKVLFMTTAVDLVITEVQEPVRFLLETKVRVCSPNERLFWPFSKRSTTENFFLKLKQIKQKERKNNTDTLYEVVCLESESERERRKTTASPSVRLPQSGSQSSVIPSPPEDDEEEDNDEPLLSGSGDVSKECAEKILETWGELLSKWHLNLNVRPKQLSSLVRNGVPEALRGEVWQLLAGCHNNDHLVEKYRILITKESPQDSAITRDINRTFPAHDYFKDTGGDGQDSLYKICKAYSVYDEEIGYCQGQSFLAAVLLLHMPEEQAFSVLVKIMFDYGLRELFKQNFEDLHCKFYQLERLMQEYIPDLYNHFLDISLEAHMYASQWFLTLFTAKFPLYMVFHIIDLLLCEGISVIFNVALGLLKTSKDDLLLTDFEGALKFFRVQLPKRYRSEENAKKLMELACNMKISQKKLKKYEKEYHTMREQQAQQEDPIERFERENRRLQEANMRLEQENDDLAHELVTSKIALRKDLDNAEEKADALNKELLMTKQKLIDAEEEKRRLEEESAQLKEMCRRELDKAESEIKKNSSIIGDYKQICSQLSERLEKQQTANKVEIEKIRQKVDDCERCREFFNKEGRVKGISSTKEVLDEDTDEEKETLKNQLREMELELAQTKLQLVEAECKIQDLEHHLGLALNEVQAAKKTWFNRTLSSIKTATGVQGKETC.

The disordered stretch occupies residues 1–79; it reads MDDKASVGKI…DPPMDDQPGE (79 aa). Low complexity predominate over residues 7–22; the sequence is VGKISVSSDSVSTLNS. At serine 42 the chain carries Phosphoserine. The PID domain occupies 142–298; it reads EDSVVFSKLT…IFTFSVSLEI (157 aa). Serine 360 is subject to Phosphoserine. Residues 482-527 are disordered; that stretch reads ERERRKTTASPSVRLPQSGSQSSVIPSPPEDDEEEDNDEPLLSGSG. A compositionally biased stretch (polar residues) spans 489–506; that stretch reads TASPSVRLPQSGSQSSVI. Acidic residues predominate over residues 510-520; it reads PEDDEEEDNDE. In terms of domain architecture, Rab-GAP TBC spans 566–752; it reads GVPEALRGEV…HIIDLLLCEG (187 aa). Positions 798-1047 form a coiled coil; that stretch reads KKLMELACNM…ALNEVQAAKK (250 aa). Threonine 996 carries the post-translational modification Phosphothreonine.

In terms of assembly, interacts with RAB6A and tubulin gamma.

Its subcellular location is the cytoplasm. The protein localises to the cytosol. It localises to the cytoskeleton. The protein resides in the microtubule organizing center. It is found in the centrosome. May act as a GTPase-activating protein of RAB6A. May play a role in microtubule nucleation by centrosome. May participate in a RAB6A-mediated pathway involved in the metaphase-anaphase transition. The sequence is that of Rab GTPase-activating protein 1 from Pongo abelii (Sumatran orangutan).